We begin with the raw amino-acid sequence, 217 residues long: 3,4-dihydroxy-2-butanone 4-phosphate synthase (217 aa).

D-ribulose 5-phosphate contacts are provided by residues 37-38, aspartate 42, 150-154, and glutamate 174; these read RE and RRGHT. Residue glutamate 38 participates in Mg(2+) binding. Histidine 153 serves as a coordination point for Mg(2+).

Belongs to the DHBP synthase family. Homodimer. Requires Mg(2+) as cofactor. Mn(2+) is required as a cofactor.

It carries out the reaction D-ribulose 5-phosphate = (2S)-2-hydroxy-3-oxobutyl phosphate + formate + H(+). It participates in cofactor biosynthesis; riboflavin biosynthesis; 2-hydroxy-3-oxobutyl phosphate from D-ribulose 5-phosphate: step 1/1. Functionally, catalyzes the conversion of D-ribulose 5-phosphate to formate and 3,4-dihydroxy-2-butanone 4-phosphate. In Shewanella sediminis (strain HAW-EB3), this protein is 3,4-dihydroxy-2-butanone 4-phosphate synthase.